A 721-amino-acid polypeptide reads, in one-letter code: Mitogen-activated protein kinase 6 (721 aa).

The Protein kinase domain occupies Tyr20–Met316. ATP is bound by residues Leu26–Val34 and Lys49. The active-site Proton acceptor is the Asp152. At Thr626 the chain carries Phosphothreonine. The short motif at Thr626–Tyr628 is the TXY element. Tyr628 carries the phosphotyrosine modification.

This sequence belongs to the protein kinase superfamily. CMGC Ser/Thr protein kinase family. MAP kinase subfamily. The cofactor is Mg(2+). In terms of processing, dually phosphorylated on Thr-626 and Tyr-628, which activates the enzyme.

It catalyses the reaction L-seryl-[protein] + ATP = O-phospho-L-seryl-[protein] + ADP + H(+). The enzyme catalyses L-threonyl-[protein] + ATP = O-phospho-L-threonyl-[protein] + ADP + H(+). With respect to regulation, activated by threonine and tyrosine phosphorylation. Functionally, phosphorylates microtubule-associated protein 2 (MAP2). May promote entry in the cell cycle. The protein is Mitogen-activated protein kinase 6 (MAPK6) of Gallus gallus (Chicken).